A 139-amino-acid polypeptide reads, in one-letter code: Hydrogenase maturation factor HypA (139 aa).

A Ni(2+)-binding site is contributed by His2. Positions 75, 78, 111, and 114 each coordinate Zn(2+).

It belongs to the HypA/HybF family.

Functionally, involved in the maturation of [NiFe] hydrogenases. Required for nickel insertion into the metal center of the hydrogenase. The sequence is that of Hydrogenase maturation factor HypA from Ignicoccus hospitalis (strain KIN4/I / DSM 18386 / JCM 14125).